A 206-amino-acid chain; its full sequence is UPF0502 protein Acid_1185 (206 aa).

Belongs to the UPF0502 family.

This chain is UPF0502 protein Acid_1185, found in Solibacter usitatus (strain Ellin6076).